Here is a 1172-residue protein sequence, read N- to C-terminus: Lysylphosphatidylglycerol biosynthesis bifunctional protein LysX (1172 aa).

Residues 1–34 (MGLHLTVPGLRRDGRGVQSNSHDTSSKTTADISR) are disordered. The interval 1–663 (MGLHLTVPGL…LLHHDGSAPD (663 aa)) is phosphatidylglycerol lysyltransferase. Positions 17 to 31 (VQSNSHDTSSKTTAD) are enriched in polar residues. The next 7 helical transmembrane spans lie at 80–100 (VPAA…LASV), 122–142 (FPDT…ALTA), 146–166 (IAWL…AAEI), 177–197 (FGEN…VLGY), 214–234 (AVWL…VELF), 272–292 (AIFG…LFLS), and 612–632 (VIPR…LPFS). Residues 664–1172 (VSGLRQVGLT…TLPFPLAKPH (509 aa)) are lysine--tRNA ligase. The OB DNA-binding region spans 726–804 (VSVSGRIMRI…SLIVSGWRLI (79 aa)). 2 residues coordinate Mg(2+): Asp1084 and Glu1091.

It in the N-terminal section; belongs to the LPG synthetase family. The protein in the C-terminal section; belongs to the class-II aminoacyl-tRNA synthetase family. Mg(2+) serves as cofactor.

The protein localises to the cell membrane. The catalysed reaction is tRNA(Lys) + L-lysine + ATP = L-lysyl-tRNA(Lys) + AMP + diphosphate. It catalyses the reaction L-lysyl-tRNA(Lys) + a 1,2-diacyl-sn-glycero-3-phospho-(1'-sn-glycerol) = a 1,2-diacyl-sn-glycero-3-phospho-1'-(3'-O-L-lysyl)-sn-glycerol + tRNA(Lys). Catalyzes the production of L-lysyl-tRNA(Lys)transfer and the transfer of a lysyl group from L-lysyl-tRNA(Lys) to membrane-bound phosphatidylglycerol (PG), which produces lysylphosphatidylglycerol (LPG), one of the components of the bacterial membrane with a positive net charge. LPG synthesis contributes to the resistance to cationic antimicrobial peptides (CAMPs) and likely protects M.tuberculosis against the CAMPs produced by competiting microorganisms (bacteriocins). In fact, the modification of anionic phosphatidylglycerol with positively charged L-lysine results in repulsion of the peptides. The chain is Lysylphosphatidylglycerol biosynthesis bifunctional protein LysX (lysX) from Mycobacterium bovis (strain BCG / Pasteur 1173P2).